The primary structure comprises 290 residues: 4-diphosphocytidyl-2-C-methyl-D-erythritol kinase (290 aa).

The active site involves Lys10. Residue 96–106 coordinates ATP; sequence PIAAGLGGGSS. Asp138 is an active-site residue.

It belongs to the GHMP kinase family. IspE subfamily.

It carries out the reaction 4-CDP-2-C-methyl-D-erythritol + ATP = 4-CDP-2-C-methyl-D-erythritol 2-phosphate + ADP + H(+). Its pathway is isoprenoid biosynthesis; isopentenyl diphosphate biosynthesis via DXP pathway; isopentenyl diphosphate from 1-deoxy-D-xylulose 5-phosphate: step 3/6. Catalyzes the phosphorylation of the position 2 hydroxy group of 4-diphosphocytidyl-2C-methyl-D-erythritol. This chain is 4-diphosphocytidyl-2-C-methyl-D-erythritol kinase, found in Caulobacter vibrioides (strain NA1000 / CB15N) (Caulobacter crescentus).